We begin with the raw amino-acid sequence, 167 residues long: MVIAVYPGTFDPFTRGHEDLVRRASNIFDELIVGVAQSPNKRPFFALEERIEIAREVLGHYPNVRVEGFSGLLKDFVRKNGARVIVRGLRAVSDFEYEFQMAGMNRYLLPDVETMFLTPSDQYQFISGTFVREIAVLGGDVSKFVFPSVEKWLKEKTGKTEGSGKSE.

Position 9 (Thr9) interacts with substrate. Residues 9-10 (TF) and His17 contribute to the ATP site. Residues Lys41, Leu73, and Arg87 each coordinate substrate. ATP is bound by residues 88–90 (GLR), Glu98, and 123–129 (YQFISGT).

This sequence belongs to the bacterial CoaD family. In terms of assembly, homohexamer. Requires Mg(2+) as cofactor.

The protein resides in the cytoplasm. It carries out the reaction (R)-4'-phosphopantetheine + ATP + H(+) = 3'-dephospho-CoA + diphosphate. Its pathway is cofactor biosynthesis; coenzyme A biosynthesis; CoA from (R)-pantothenate: step 4/5. In terms of biological role, reversibly transfers an adenylyl group from ATP to 4'-phosphopantetheine, yielding dephospho-CoA (dPCoA) and pyrophosphate. In Ralstonia pickettii (strain 12J), this protein is Phosphopantetheine adenylyltransferase.